The chain runs to 319 residues: Annexin D4 (319 aa).

2 Annexin repeats span residues 1–75 (MALP…EFSR) and 86–157 (HPWE…GLVS). Residues Gly19, Gly21, and Glu72 each contribute to the Ca(2+) site. Phosphothreonine is present on Thr115. Phosphotyrosine is present on residues Tyr159 and Tyr211. 2 Annexin repeats span residues 169–240 (DSAK…ICLL) and 241–316 (KPAL…TLLS). Phosphoserine is present on Ser277. The residue at position 287 (Tyr287) is a Phosphotyrosine.

The protein belongs to the annexin (TC 1.A.31.1) family. As to expression, expressed mainly in roots and flowers. Lower in stems and leaves.

In terms of biological role, may be involved in osmotic stress and abscisic acid signaling in a calcium-dependent manner. This chain is Annexin D4 (ANN4), found in Arabidopsis thaliana (Mouse-ear cress).